We begin with the raw amino-acid sequence, 409 residues long: Elongation factor Tu (409 aa).

In terms of domain architecture, tr-type G spans 10-214 (KPHVNVGTIG…AVDNYIPTPE (205 aa)). Residues 19–26 (GHVDHGKT) are G1. Residue 19–26 (GHVDHGKT) participates in GTP binding. Mg(2+) is bound at residue T26. The interval 60–64 (GITIN) is G2. Residues 81 to 84 (DCPG) form a G3 region. Residues 81–85 (DCPGH) and 136–139 (NKVD) contribute to the GTP site. The G4 stretch occupies residues 136 to 139 (NKVD). The G5 stretch occupies residues 174-176 (SGL).

Belongs to the TRAFAC class translation factor GTPase superfamily. Classic translation factor GTPase family. EF-Tu/EF-1A subfamily. Monomer.

The protein localises to the cytoplasm. It carries out the reaction GTP + H2O = GDP + phosphate + H(+). Functionally, GTP hydrolase that promotes the GTP-dependent binding of aminoacyl-tRNA to the A-site of ribosomes during protein biosynthesis. The sequence is that of Elongation factor Tu from Thermosynechococcus vestitus (strain NIES-2133 / IAM M-273 / BP-1).